We begin with the raw amino-acid sequence, 331 residues long: 6-phosphogluconolactonase (331 aa).

The protein belongs to the cycloisomerase 2 family.

The catalysed reaction is 6-phospho-D-glucono-1,5-lactone + H2O = 6-phospho-D-gluconate + H(+). It participates in carbohydrate degradation; pentose phosphate pathway; D-ribulose 5-phosphate from D-glucose 6-phosphate (oxidative stage): step 2/3. Catalyzes the hydrolysis of 6-phosphogluconolactone to 6-phosphogluconate. The polypeptide is 6-phosphogluconolactonase (Salmonella paratyphi A (strain ATCC 9150 / SARB42)).